The following is a 332-amino-acid chain: UPF0285 protein MK0078 (332 aa).

The protein belongs to the UPF0285 family.

The sequence is that of UPF0285 protein MK0078 from Methanopyrus kandleri (strain AV19 / DSM 6324 / JCM 9639 / NBRC 100938).